The primary structure comprises 134 residues: Small ribosomal subunit protein uS11 (134 aa).

It belongs to the universal ribosomal protein uS11 family. In terms of assembly, part of the 30S ribosomal subunit. Interacts with proteins S7 and S18. Binds to IF-3.

In terms of biological role, located on the platform of the 30S subunit, it bridges several disparate RNA helices of the 16S rRNA. Forms part of the Shine-Dalgarno cleft in the 70S ribosome. The chain is Small ribosomal subunit protein uS11 from Janthinobacterium sp. (strain Marseille) (Minibacterium massiliensis).